A 1115-amino-acid chain; its full sequence is MNNWQHFFNNPVDLSEHLKKPYFRFDNRDKEITAISFDEKANLIWSGDSYGCISSYDPTFQLYTRYRGHIGGNSVKDILSHRDGILSISEDSLHFANRRGVTKLNLTSIDIAAFSELNTMCYSPHSLKNNIYCGGDNTNWGIASIDLNRGCLDSLLNYSSKVKLMCSNNKVLSIGRQTGTVDLLDPTSNRTIKSFNAHSASISAMDLRDNTLVTVGKSKRFYNLYADPFVNVYDLRTMRQLPPVSFSKGTTMGSGGADFVQLHPLLPTVMIVASSSGSFDFIDLSNPTLRTQYVHPCQSIKKLCLSPNGDVLGILEADNHLDTWRRSSNNMGMFTNTPEMLAYPDYFNDITSDGPISVDDETYPLSSVGMPYYLDKLLSAWPPVVFKSEGTIPQLTGKSPLPSSGKLKSNLAVISSQNEKLSTQEFPLLRYDRTKYGMRNAIPDYVCLRDIRKQITSGLETSDIQTYTSINKYEVPPAYSRLPLTSGRFGTDNFDFTPFNNTEYSGLDPDVDNHYTNAIIQLYRFIPEMFNFVVGCLKDENFETTLLTDLGYLFDMMERSHGKICSSSNFQASLKSLTDKRQLENGEPQEHLEEYLESLCIRESIEDFNSSESIKRNMPQKFNRFLLSQLIKEEAQTVNHNITLNQCFGLETEIRTECSCDHYDTTVKLLPSLSISGINKTVIKQLNKKSNGQNILPYIEYAMKNVTQKNSICPTCGKTETITQECTVKNLPSVLSLELSLLDTEFSNIRSSKNWLTSEFYGSIIKNKAVLRSTASELKGTSHIFKYELNGYVAKITDNNNETRLVTYVKKYNPKENCFKWLMFNDYLVVEITEEEALKMTYPWKTPEIIIYCDAEELRKPFFSVDTYSINYDILFRDYFANGIRDTARREYKLLTHDEAPKSGTLVAIDAEFVSLQSELCEIDHQGIRSIIRPKRTALARISIIRGEEGELYGVPFVDDYVVNTNHIEDYLTRYSGILPGDLDPEKSTKRLVRRNVVYRKVWLLMQLGCVFVGHGLNNDFKHININVPRNQIRDTAIYFLQGKRYLSLRYLAYVLLGMNIQEGNHDSIEDAHTALILYKKYLHLKEKAIFEKVLNSVYEEGRAHNFKVPETSKG.

WD repeat units lie at residues 27-66 (NRDKEITAISFDEKANLIWSGDSYGCISSYDPTFQLYTRY), 112-153 (AAFS…GCLD), 155-194 (LLNYSSKVKLMCSNNKVLSIGRQTGTVDLLDPTSNRTIKS), 197-236 (AHSASISAMDLRDNTLVTVGKSKRFYNLYADPFVNVYDLR), and 295-334 (HPCQSIKKLCLSPNGDVLGILEADNHLDTWRRSSNNMGMF). Residues 337-473 (TPEMLAYPDY…IQTYTSINKY (137 aa)) form a linker region. In terms of domain architecture, USP spans 474–855 (EVPPAYSRLP…TPEIIIYCDA (382 aa)). Zn(2+) contacts are provided by cysteine 660, histidine 662, cysteine 713, and cysteine 716. The region spanning 907 to 1079 (VAIDAEFVSL…EDAHTALILY (173 aa)) is the Exonuclease domain. 4 residues coordinate a divalent metal cation: aspartate 910, glutamate 912, aspartate 1020, and aspartate 1071.

The protein belongs to the peptidase C19 family. PAN2 subfamily. As to quaternary structure, forms a heterotrimer with an asymmetric homodimer of the regulatory subunit PAN3 to form the poly(A)-nuclease (PAN) deadenylation complex. A divalent metal cation is required as a cofactor.

It localises to the cytoplasm. It catalyses the reaction Exonucleolytic cleavage of poly(A) to 5'-AMP.. With respect to regulation, positively regulated by the regulatory subunit PAN3. Negatively regulated by PAB1-binding protein PBP1. Inhibited under stress conditions. Inhibition of deadenylation under stress increases mRNA stability, which may be a mechanism to retain the majority of the cytoplasmic pool of mRNAs for later reuse and recovery from stress. Functionally, catalytic subunit of the poly(A)-nuclease (PAN) deadenylation complex, one of two cytoplasmic mRNA deadenylases involved in mRNA turnover. PAN specifically shortens poly(A) tails of RNA and the activity is stimulated by poly(A)-binding protein PAB1. PAN deadenylation is followed by rapid degradation of the shortened mRNA tails by the CCR4-NOT complex. Deadenylated mRNAs are then degraded by two alternative mechanisms, namely exosome-mediated 3'-5' exonucleolytic degradation, or deadenylation-dependent mRNA decaping by DCP1-DCP2 and subsequent 5'-3' exonucleolytic degradation by XRN1. May also be involved in post-transcriptional maturation of mRNA poly(A) tails, trimming the tails from their synthesized length to the slightly shorter, apparently messenger-specific length found on newly exported mRNAs. PAN cooperates with protein kinase DUN1 in the regulation of RAD5 mRNA levels and cell survival in response to replicational stress. The polypeptide is PAN2-PAN3 deadenylation complex catalytic subunit PAN2 (Saccharomyces cerevisiae (strain ATCC 204508 / S288c) (Baker's yeast)).